The sequence spans 292 residues: Elongation factor Ts (292 aa).

Positions 82–85 are involved in Mg(2+) ion dislocation from EF-Tu; that stretch reads TDFV.

It belongs to the EF-Ts family.

The protein resides in the cytoplasm. In terms of biological role, associates with the EF-Tu.GDP complex and induces the exchange of GDP to GTP. It remains bound to the aminoacyl-tRNA.EF-Tu.GTP complex up to the GTP hydrolysis stage on the ribosome. This Legionella pneumophila (strain Paris) protein is Elongation factor Ts.